We begin with the raw amino-acid sequence, 269 residues long: Hydroxyethylthiazole kinase (269 aa).

Met-41 lines the substrate pocket. ATP is bound by residues Arg-117 and Ser-163. Residue Gly-190 coordinates substrate.

The protein belongs to the Thz kinase family. Requires Mg(2+) as cofactor.

It carries out the reaction 5-(2-hydroxyethyl)-4-methylthiazole + ATP = 4-methyl-5-(2-phosphooxyethyl)-thiazole + ADP + H(+). Its pathway is cofactor biosynthesis; thiamine diphosphate biosynthesis; 4-methyl-5-(2-phosphoethyl)-thiazole from 5-(2-hydroxyethyl)-4-methylthiazole: step 1/1. Catalyzes the phosphorylation of the hydroxyl group of 4-methyl-5-beta-hydroxyethylthiazole (THZ). This chain is Hydroxyethylthiazole kinase, found in Latilactobacillus sakei subsp. sakei (strain 23K) (Lactobacillus sakei subsp. sakei).